The chain runs to 312 residues: Serine/threonine-protein kinase ppk11 (312 aa).

The 253-residue stretch at 6–258 (YRDLQLIGQG…AEYLSKHKFI (253 aa)) folds into the Protein kinase domain. ATP is bound by residues 12–20 (IGQGSFGSV) and K35. Residue D127 is the Proton acceptor of the active site.

It belongs to the protein kinase superfamily. Ser/Thr protein kinase family.

The protein localises to the cytoplasm. Its subcellular location is the nucleus. The enzyme catalyses L-seryl-[protein] + ATP = O-phospho-L-seryl-[protein] + ADP + H(+). It carries out the reaction L-threonyl-[protein] + ATP = O-phospho-L-threonyl-[protein] + ADP + H(+). This chain is Serine/threonine-protein kinase ppk11 (ppk11), found in Schizosaccharomyces pombe (strain 972 / ATCC 24843) (Fission yeast).